The following is a 375-amino-acid chain: Growth/differentiation factor 8 (375 aa).

A signal peptide spans 1 to 23 (MQKLQIFVYIYLFMLLVAGPVDL). A propeptide spanning residues 24 to 266 (NENSEQKENV…VTDTPKRSRR (243 aa)) is cleaved from the precursor. N-linked (GlcNAc...) asparagine glycosylation is found at asparagine 48 and asparagine 71. Intrachain disulfides connect cysteine 272/cysteine 282, cysteine 281/cysteine 340, cysteine 309/cysteine 372, and cysteine 313/cysteine 374.

This sequence belongs to the TGF-beta family. In terms of assembly, homodimer; disulfide-linked. Interacts with WFIKKN2, leading to inhibit its activity. Interacts with FSTL3. Synthesized as large precursor molecule that undergoes proteolytic cleavage to generate an N-terminal propeptide and a disulfide linked C-terminal dimer, which is the biologically active molecule. The circulating form consists of a latent complex of the C-terminal dimer and other proteins, including its propeptide, which maintain the C-terminal dimer in a latent, inactive state. Ligand activation requires additional cleavage of the prodomain by a tolloid-like metalloproteinase.

The protein localises to the secreted. Acts specifically as a negative regulator of skeletal muscle growth. This is Growth/differentiation factor 8 (MSTN) from Ovis aries (Sheep).